A 187-amino-acid chain; its full sequence is PRA1 family protein G1 (187 aa).

A run of 3 helical transmembrane segments spans residues 84–104, 125–145, and 146–166; these read LFLIGDPMALVTVASFVAMWL, VIVFGLILGSLWALWFINSLQ, and CLILGVVTSVLLCLVHAIIRN.

It belongs to the PRA1 family. In terms of tissue distribution, expressed in roots and lateral roots.

The protein localises to the endosome membrane. Functionally, may be involved in both secretory and endocytic intracellular trafficking in the endosomal/prevacuolar compartments. The protein is PRA1 family protein G1 (PRA1G1) of Arabidopsis thaliana (Mouse-ear cress).